Consider the following 373-residue polypeptide: Alanine racemase (373 aa).

Lys37 acts as the Proton acceptor; specific for D-alanine in catalysis. Lys37 carries the N6-(pyridoxal phosphate)lysine modification. A substrate-binding site is contributed by Arg135. Residue Tyr266 is the Proton acceptor; specific for L-alanine of the active site. Met313 contributes to the substrate binding site.

It belongs to the alanine racemase family. It depends on pyridoxal 5'-phosphate as a cofactor.

It carries out the reaction L-alanine = D-alanine. It functions in the pathway amino-acid biosynthesis; D-alanine biosynthesis; D-alanine from L-alanine: step 1/1. In terms of biological role, catalyzes the interconversion of L-alanine and D-alanine. This organism is able to use both L- and D-alanine as a nitrogen source. May also prevent D-alanine from interfering with the use of L-alanine. The chain is Alanine racemase (alr) from Methanococcus maripaludis (strain DSM 14266 / JCM 13030 / NBRC 101832 / S2 / LL).